Reading from the N-terminus, the 103-residue chain is Urease subunit beta (103 aa).

The protein belongs to the urease beta subunit family. As to quaternary structure, heterotrimer of UreA (gamma), UreB (beta) and UreC (alpha) subunits. Three heterotrimers associate to form the active enzyme.

The protein resides in the cytoplasm. The catalysed reaction is urea + 2 H2O + H(+) = hydrogencarbonate + 2 NH4(+). The protein operates within nitrogen metabolism; urea degradation; CO(2) and NH(3) from urea (urease route): step 1/1. The polypeptide is Urease subunit beta (Streptomyces avermitilis (strain ATCC 31267 / DSM 46492 / JCM 5070 / NBRC 14893 / NCIMB 12804 / NRRL 8165 / MA-4680)).